The chain runs to 422 residues: Adenylosuccinate synthetase (422 aa).

GTP is bound by residues 11 to 17 and 39 to 41; these read GDEGKGK and GHT. The active-site Proton acceptor is Asp12. The Mg(2+) site is built by Asp12 and Gly39. IMP contacts are provided by residues 12–15, 37–40, Thr129, Arg143, Asn219, Thr234, and Arg298; these read DEGK and NAGH. The active-site Proton donor is His40. Residue 294-300 coordinates substrate; the sequence is VTTGRRR. GTP-binding positions include Arg300, 326 to 328, and 409 to 411; these read KLD and GTG.

Belongs to the adenylosuccinate synthetase family. Homodimer. It depends on Mg(2+) as a cofactor.

It is found in the cytoplasm. The enzyme catalyses IMP + L-aspartate + GTP = N(6)-(1,2-dicarboxyethyl)-AMP + GDP + phosphate + 2 H(+). Its pathway is purine metabolism; AMP biosynthesis via de novo pathway; AMP from IMP: step 1/2. Its function is as follows. Plays an important role in the de novo pathway and in the salvage pathway of purine nucleotide biosynthesis. Catalyzes the first committed step in the biosynthesis of AMP from IMP. The sequence is that of Adenylosuccinate synthetase from Ajellomyces capsulatus (strain NAm1 / WU24) (Darling's disease fungus).